Here is a 2543-residue protein sequence, read N- to C-terminus: MLNTEDILCKMLFAQLQSIGFFTESKSQPVLENFYGRWFEESQSILERHQFLKRTENGHVPTRSIGTMSELWKEWNEQKFDLLQDNNMKAMVTLVETALKALPEILTGKASATDILFPNSSMDLVEGVYKNNQVADYFNDVLADTLTAYLQERLKQEPEAKIRILEIGAGTGGTSAAVFQKLKAWQTHIKEYCYTDLSKAFLMHAENKYGPDNPYLTYKRFNVEEPASEQHIDAGGYDAVIAANVLHATKNIRQTLRNAKAVLKKNGLLLLNEISNHNIYSHLTFGLLEGWWLYEDPDLRIPGCPGLYPDTWKMVLESEGFRYVSFMAEQSHQLGQQIIAAESNGVVRQKKRTEAEEDPSHIQMNAEIDHSQESDSLIEQTAQFVKHTLAKSIKLSPERIHEDTTFEKYGIDSILQVNFIRELEKVTGELPKTILFEHNNTKELVEYLVKGHENKLRTALLKEKTKPAKNEAPLQTERTDPNKPFTFHTRRFVTEQEVTETQLANTEPLKIEKTSNLQGTHFNDSSTEDIAIIGVSGRYPMSNSLEELWGHLIAGDNCITEAPESRWRTSLLKTLSKDPKKPANKKRYGGFLQDIEAFDHQLFEVEQNRVMEMTPELRLCLETVWETFEDGGYTRTRLDKLRDDDGVGVFIGNMYNQYFWNIPSLEQAVLSSNGGDWHIANRVSHFFNLTGPSIAVSSACSSSLNAIHLACESLKLKNCSMAIAGGVNLTLDLSKYDSLERANLLGSGNQSKSFGTGNGLIPGEGVGAVLLKPLSKAMEDQDHIYAVIKSSFANHSGGRQMYTAPDPKQQAKLIVKSIQQSGIDPETIGYIESAANGSALGDPIEVIALTNAFQQYTNKKQFCAIGSVKSNLGHLEAASGISQLTKVLLQMKKGTLVPTINAMPVNPNIKLEHTAFYLQEQTEPWHRLNDPETGKQLPRRSMINSFGAGGAYANLIIEEYMETAPEKEHIAPRQQEFTAVFSAKTKWSLLSYLENMQLFLEKEASLDIEPVVQALHRRNHNLEHRTAFTVASTQELIEKLKVFRTSRESSLQQGIYTSFDLQPCAESASRDREINAAEQWAQGALIAFKEADIGNRTGWVHLPHYAFDHNTSFHFDVSSINEKSSDVEDNINQPVIQDQFTYDEPYVQGHVFNNERVLVGATYGSLAIEAFFNLFPEENSGRISKLSYISPIVIKQGETIELQAKPLQKDQVIELQIMYREPSSGLWKPAAIGQCGIGSFEPKKVNIENVKHSLTKLHHIDQMYKTGNGPEWGELFKTITHLYRDHKSILAKIRLPQSGLANGHHYTVSPLMTNSAYLAILSFLEQFDMTGGFLPFGINDIQFTKQTIKGDCWLLITLVKNTGDMLLFDVDVINESSETVLHYSGYSLKQLRISNQRGNQNKAIKASNLKARIRSYVTDKLAVNMADPSKLSIAKAHIMDFGIDSSQLVALTREMEAETKIELNPTLFFEYPTIQELIDFFADKHEASFAQLFGEAHQQEERPAQIENQMKQIPAYETNTDKTIEHAADGIAIIGMSGQFPKANSVTEFWDNLVQGKNCVSEVPKERWDWRKYAAADKEGQSSLQWGGFIEGIGEFDPLFFGISPKEAANMDPQEFLLLIHAWKAMEDAGLTGQVLSSRPTGVFVAAGNTDTAVVPSLIPNRISYALDVKGPSEYYEAACSSALVALHRAIQSIRNGECEQAIVGAVNLLLSPKGFIGFDSMGYLSEKGQAKSFQADANGFVRSEGAGVLIIKPLQKAIEDSDHIYSVIKGSGVSHGGRGMSLHAPNPAGMKDAMLKAYQGAQIDPKTVTYIEAHGIASPLADAIEIEALKSGCSQLELELPQEVREEAPCYISSLKPSIGHGELVSGMAALMKVSMAMKHQTIPGISGFSSLNDQVSLKGTRFRVTAENQQWRDLSDDAGKKIPRRASINSYSFGGVNAHVILEEYIPLPKPPVSMSENGAHIVVLSAKNQDRLKAIAQQQLDYVNKQQELSLQDYAYTLQTGREEMEDRLALVVRSKEELVIGLQACLAEKGDKLKSSVPVFSGNAENGSSDLEALLDGPLREMVIETLLSENNLEKIAFCWTKGVQIPWEKLYQGKGARRIPLPTYPFEKRSCWNGFQAVENTPSVSQDERINNSSDHHILANVLGMAPDELQFHKPLQQYGFDSISCIQLLQQLQSKVDPLIVLTELQACHTVQDMMDLIAKKQEDTSLQNDQARTFPELIPLNDGKRGRPVFWFHGGVGGVEIYQQFAQKSQRPFYGIQARGFMTDSAPLHGIEQMASYYIEIIRSIQPEGPYDVGGYSLGGMIAYEVTRQLQSQGLAVKSMVMIDSPYRSETKENEASMKTSMLQTINTMLASIAKREKFTDVLISREEVDISLEDEEFLSELIDLAKERGLNKPDKQIRAQAQQMMKTQRAYDLESYTVKPLPDPETVKCYYFRNKSRSFFGDLDTYFTLSNEKEPFDQAAYWEEWERQIPHFHLVDVDSSNHFMILTEPKASTALLEFCEKLYSNRGVVNANFLKAFRKKHEAREEKETDELVKR.

Residues 165-269 (LEIGAGTGGT…KAVLKKNGLL (105 aa)) are methyltransferase. Positions 376–452 (SLIEQTAQFV…ELVEYLVKGH (77 aa)) constitute a Carrier 1 domain. O-(pantetheine 4'-phosphoryl)serine is present on serine 413. Residues 465–485 (TKPAKNEAPLQTERTDPNKPF) are disordered. Residues 527–959 (TEDIAIIGVS…GAYANLIIEE (433 aa)) form the Ketosynthase family 3 (KS3) 1 domain. Cysteine 700 functions as the For beta-ketoacyl synthase 1 activity in the catalytic mechanism. Positions 1114-1242 (HFDVSSINEK…GQCGIGSFEP (129 aa)) are N-terminal hotdog fold. Positions 1114–1397 (HFDVSSINEK…LKQLRISNQR (284 aa)) constitute a PKS/mFAS DH domain. The C-terminal hotdog fold stretch occupies residues 1255-1397 (TKLHHIDQMY…LKQLRISNQR (143 aa)). Residues 1407-1485 (SNLKARIRSY…ELIDFFADKH (79 aa)) enclose the Carrier 2 domain. Position 1445 is an O-(pantetheine 4'-phosphoryl)serine (serine 1445). Positions 1528–1946 (ADGIAIIGMS…GVNAHVILEE (419 aa)) constitute a Ketosynthase family 3 (KS3) 2 domain. Catalysis depends on for beta-ketoacyl synthase 2 activity residues cysteine 1680, histidine 1815, and histidine 1862. The Carrier 3 domain maps to 2134 to 2208 (RINNSSDHHI…DMMDLIAKKQ (75 aa)). O-(pantetheine 4'-phosphoryl)serine is present on serine 2168. A thioesterase region spans residues 2234–2514 (RPVFWFHGGV…EFCEKLYSNR (281 aa)).

Requires pantetheine 4'-phosphate as cofactor.

The protein resides in the cytoplasm. It functions in the pathway antibiotic biosynthesis; bacillaene biosynthesis. Its function is as follows. Involved in some intermediate steps for the synthesis of the antibiotic polyketide bacillaene which is involved in secondary metabolism. This is Polyketide synthase PksR (pksR) from Bacillus subtilis (strain 168).